The chain runs to 202 residues: Potassium-transporting ATPase KdpC subunit 1 (202 aa).

A helical membrane pass occupies residues 17-37 (LWVIAAVIYPFFMIAVGQIVF).

It belongs to the KdpC family. In terms of assembly, the system is composed of three essential subunits: KdpA, KdpB and KdpC.

It localises to the cell inner membrane. Its function is as follows. Part of the high-affinity ATP-driven potassium transport (or Kdp) system, which catalyzes the hydrolysis of ATP coupled with the electrogenic transport of potassium into the cytoplasm. This subunit acts as a catalytic chaperone that increases the ATP-binding affinity of the ATP-hydrolyzing subunit KdpB by the formation of a transient KdpB/KdpC/ATP ternary complex. This is Potassium-transporting ATPase KdpC subunit 1 from Nostoc sp. (strain PCC 7120 / SAG 25.82 / UTEX 2576).